The primary structure comprises 239 residues: Small ribosomal subunit protein uS2 (239 aa).

This sequence belongs to the universal ribosomal protein uS2 family.

This Parasynechococcus marenigrum (strain WH8102) protein is Small ribosomal subunit protein uS2.